Here is a 137-residue protein sequence, read N- to C-terminus: 15.7 kDa heat shock protein, peroxisomal (137 aa).

The region spanning 15–134 is the sHSP domain; it reads QEWSRSTALI…SSKVRNVNIT (120 aa). The short motif at 135 to 137 is the Microbody targeting signal element; sequence SKL.

The protein belongs to the small heat shock protein (HSP20) family. May form oligomeric structures.

It is found in the peroxisome. Its function is as follows. Possesses chaperone activity. The polypeptide is 15.7 kDa heat shock protein, peroxisomal (HSP15.7) (Arabidopsis thaliana (Mouse-ear cress)).